The following is a 503-amino-acid chain: Maturase K (503 aa).

Belongs to the intron maturase 2 family. MatK subfamily.

Its subcellular location is the plastid. It localises to the chloroplast. In terms of biological role, usually encoded in the trnK tRNA gene intron. Probably assists in splicing its own and other chloroplast group II introns. This is Maturase K from Panax ginseng (Korean ginseng).